The chain runs to 337 residues: Outer membrane protein assembly factor BamC (337 aa).

An N-terminal signal peptide occupies residues 1–16; sequence MKKWLFPFAFVATLAG. The N-palmitoyl cysteine moiety is linked to residue Cys-17. The S-diacylglycerol cysteine moiety is linked to residue Cys-17.

It belongs to the BamC family. In terms of assembly, part of the Bam complex.

Its subcellular location is the cell outer membrane. In terms of biological role, part of the outer membrane protein assembly complex, which is involved in assembly and insertion of beta-barrel proteins into the outer membrane. The sequence is that of Outer membrane protein assembly factor BamC from Pasteurella multocida (strain Pm70).